The primary structure comprises 430 residues: GPI mannosyltransferase 1 (430 aa).

Residues 1–11 (MELQSLIDTVS) are Cytoplasmic-facing. Residues 12–32 (LQKLLLLGALLRLILIAYAFF) form a helical membrane-spanning segment. Over 33–72 (HDQWFRVKYTDIDYMIVVDGARHMWNGGSPFDRTTFRYTP) the chain is Lumenal. The chain crosses the membrane as a helical span at residues 73–93 (LLAALVMPSIWIANPMGKLIF). Residues 94-115 (ASSDLGAAWYCYGVLKSFAKER) lie on the Cytoplasmic side of the membrane. The chain crosses the membrane as a helical span at residues 116-136 (SAKWMVSLFILFNPIVLSVST). The Lumenal segment spans residues 137-163 (RGNSDMLVTFMSLMVLSKFARRKCYQA). A helical transmembrane segment spans residues 164 to 184 (AAVLGFAVHFKIYPIIYALPL). Over 185–206 (TLGVWEQSVAASTNTWRRVVKT) the chain is Cytoplasmic. A helical membrane pass occupies residues 207 to 227 (AVVVSICALMAAISFAVPTVL). The Lumenal segment spans residues 228–360 (CYMKYGQQYL…AFKFFSWVKA (133 aa)). A helical membrane pass occupies residues 361–381 (LGVVLMWAATIPLWVTTAVPL). Residues 382–388 (EFHGYSD) are Cytoplasmic-facing. The chain crosses the membrane as a helical span at residues 389–409 (FAQLWIVSCLFFLAMVVLASM). The Lumenal segment spans residues 410–430 (LARIAYRVQCTKCSAKSIKVA).

This sequence belongs to the PIGM family.

Its subcellular location is the endoplasmic reticulum membrane. The protein operates within glycolipid biosynthesis; glycosylphosphatidylinositol-anchor biosynthesis. Mannosyltransferase involved in glycosylphosphatidylinositol-anchor biosynthesis. Transfers the first alpha-1,4-mannose to GlcN-PI during GPI precursor assembly. In Trypanosoma brucei brucei (strain 927/4 GUTat10.1), this protein is GPI mannosyltransferase 1 (PIGM).